Consider the following 151-residue polypeptide: Large ribosomal subunit protein bL9 (151 aa).

This sequence belongs to the bacterial ribosomal protein bL9 family.

In terms of biological role, binds to the 23S rRNA. The sequence is that of Large ribosomal subunit protein bL9 from Nitrosococcus oceani (strain ATCC 19707 / BCRC 17464 / JCM 30415 / NCIMB 11848 / C-107).